The primary structure comprises 351 residues: Mitogen-activated protein kinase 2 (351 aa).

One can recognise a Protein kinase domain in the interval 16 to 304; the sequence is YEILDVIGEG…AEEALQHNYL (289 aa). ATP contacts are provided by residues 22 to 30 and lysine 45; that span reads IGEGAYGIV. Aspartate 140 acts as the Proton acceptor in catalysis. Threonine 176 is modified (phosphothreonine). Positions 176 to 178 match the TXY motif; the sequence is TEY. The residue at position 178 (tyrosine 178) is a Phosphotyrosine.

Belongs to the protein kinase superfamily. CMGC Ser/Thr protein kinase family. MAP kinase subfamily. Mg(2+) is required as a cofactor. Mn(2+) serves as cofactor. In terms of processing, dually phosphorylated on Thr-176 and Tyr-178, which activates the enzyme.

Its subcellular location is the nucleus. The catalysed reaction is L-seryl-[protein] + ATP = O-phospho-L-seryl-[protein] + ADP + H(+). The enzyme catalyses L-threonyl-[protein] + ATP = O-phospho-L-threonyl-[protein] + ADP + H(+). Activated by tyrosine and threonine phosphorylation. Inhibited by the MEK inhibitor U0126 but not by the p38 inhibitor SB203580. Cobalt abolishes kinase activity, while calcium, copper and nickel have little effect on kinase activity. Functionally, serine-threonine protein kinase which may be involved in pheromone signaling. Functionally complements the MAPK pheromone signaling pathway in S.cerevisiae. The polypeptide is Mitogen-activated protein kinase 2 (Pneumocystis carinii).